The sequence spans 296 residues: Homoserine kinase (296 aa).

Position 84–94 (P84–S94) interacts with ATP.

Belongs to the GHMP kinase family. Homoserine kinase subfamily.

The protein localises to the cytoplasm. The catalysed reaction is L-homoserine + ATP = O-phospho-L-homoserine + ADP + H(+). It participates in amino-acid biosynthesis; L-threonine biosynthesis; L-threonine from L-aspartate: step 4/5. In terms of biological role, catalyzes the ATP-dependent phosphorylation of L-homoserine to L-homoserine phosphate. The chain is Homoserine kinase (thrB) from Lactococcus lactis subsp. cremoris (Streptococcus cremoris).